The primary structure comprises 186 residues: Adenylate kinase (186 aa).

11–16 provides a ligand contact to ATP; sequence GAGKGT. The interval 31–60 is NMP; that stretch reads STGDILRAAVKNGTAMGIEAKKYMDAGDLV. Residues Thr32, Arg37, 58–60, 86–89, and Gln93 each bind AMP; these read DLV and GFPR. Residues 127–137 are LID; sequence GRAIKEGRSDD. Arg128 lines the ATP pocket. Residues Arg134 and Arg145 each coordinate AMP. Residue Gly173 participates in ATP binding.

The protein belongs to the adenylate kinase family. As to quaternary structure, monomer.

It localises to the cytoplasm. It carries out the reaction AMP + ATP = 2 ADP. It participates in purine metabolism; AMP biosynthesis via salvage pathway; AMP from ADP: step 1/1. Functionally, catalyzes the reversible transfer of the terminal phosphate group between ATP and AMP. Plays an important role in cellular energy homeostasis and in adenine nucleotide metabolism. This is Adenylate kinase from Leptospira biflexa serovar Patoc (strain Patoc 1 / Ames).